We begin with the raw amino-acid sequence, 90 residues long: DNA-binding protein HU-alpha (90 aa).

Belongs to the bacterial histone-like protein family. In terms of assembly, heterodimer of an alpha and a beta chain.

Functionally, histone-like DNA-binding protein which is capable of wrapping DNA to stabilize it, and thus to prevent its denaturation under extreme environmental conditions. The chain is DNA-binding protein HU-alpha (hupA) from Pseudomonas aeruginosa (strain ATCC 15692 / DSM 22644 / CIP 104116 / JCM 14847 / LMG 12228 / 1C / PRS 101 / PAO1).